A 409-amino-acid chain; its full sequence is Ubiquitin-associated domain-containing protein 1 (409 aa).

Residue methionine 1 is modified to N-acetylmethionine. The region spanning 14 to 98 is the Ubiquitin-like domain; that stretch reads LRLHICAADG…LLLIKKRVPS (85 aa). The tract at residues 101-122 is disordered; sequence PKMADVSAEEKKKQEQKAPDKD. The segment covering 108 to 122 has biased composition (basic and acidic residues); it reads AEEKKKQEQKAPDKD. The UBA 1 domain maps to 187–231; the sequence is DEDERVDETALRQLTEMGFPESRASKALRLNHMSVPQAMEWLIEH. The tract at residues 239-273 is disordered; the sequence is TPLPGHAAQAGASAAATTSSTSSEAAVGTSVEDEE. The span at 245–268 shows a compositional bias: low complexity; sequence AAQAGASAAATTSSTSSEAAVGTS. The UBA 2 domain maps to 292–332; the sequence is RADARAVISLMEMGFDEKEVIDALRVNNNQQNAACEWLLGD. An STI1 domain is found at 357-396; it reads NPVVQLGLTNPKTLLAFEDMLENPLNSTQWMNDPETGPVM.

Component of the KPC complex composed of RNF123/KPC1 and UBAC1/KPC2. Interacts (via ubiquitin-like domain) with RNF123. Interacts (via ubiquitin-like and UBA domains) with the proteasome via its N-terminal domain.

The protein resides in the cytoplasm. It functions in the pathway protein modification; protein ubiquitination. In terms of biological role, non-catalytic component of the KPC complex, a E3 ubiquitin-protein ligase complex that mediates polyubiquitination of target proteins, such as CDKN1B and NFKB1. The KPC complex catalyzes polyubiquitination and proteasome-mediated degradation of CDKN1B during G1 phase of the cell cycle. The KPC complex also acts as a key regulator of the NF-kappa-B signaling by promoting maturation of the NFKB1 component of NF-kappa-B by catalyzing ubiquitination of the NFKB1 p105 precursor. Within the KPC complex, UBAC1 acts as an adapter that promotes the transfer of target proteins that have been polyubiquitinated by RNF123/KPC1 to the 26S proteasome. The polypeptide is Ubiquitin-associated domain-containing protein 1 (Ubac1) (Mus musculus (Mouse)).